The following is an 890-amino-acid chain: DNA mismatch repair protein MutS (890 aa).

634–641 (GPNMGGKS) is an ATP binding site.

Belongs to the DNA mismatch repair MutS family.

In terms of biological role, this protein is involved in the repair of mismatches in DNA. It is possible that it carries out the mismatch recognition step. This protein has a weak ATPase activity. This Burkholderia pseudomallei (strain K96243) protein is DNA mismatch repair protein MutS.